The primary structure comprises 634 residues: Chaperone protein HtpG (634 aa).

Residues 1–342 (MTVDTDKQTL…SADLSLNVSR (342 aa)) are a; substrate-binding. A b region spans residues 343-559 (EILQSGPVVD…QGDLGLQMRQ (217 aa)). A c region spans residues 560–634 (LLEASGQAVP…LNKLLLELSA (75 aa)).

The protein belongs to the heat shock protein 90 family. In terms of assembly, homodimer.

The protein localises to the cytoplasm. In terms of biological role, molecular chaperone. Has ATPase activity. In Xanthomonas campestris pv. campestris (strain ATCC 33913 / DSM 3586 / NCPPB 528 / LMG 568 / P 25), this protein is Chaperone protein HtpG.